Here is a 143-residue protein sequence, read N- to C-terminus: ATP synthase subunit 9, mitochondrial (143 aa).

Residues 1-62 (MAASRVFAQR…ARQAFAARRQ (62 aa)) constitute a mitochondrion transit peptide. The next 2 membrane-spanning stretches (helical) occupy residues 85–105 (IGLGGAGIGIGVVFGSLLLAV) and 119–139 (AILGFAFVEAIGLFDLMVAMM).

The protein belongs to the ATPase C chain family. As to quaternary structure, F-type ATPases have 2 components, CF(1) - the catalytic core - and CF(0) - the membrane proton channel. CF(1) has five subunits: alpha(3), beta(3), gamma(1), delta(1), epsilon(1). CF(0) has three main subunits: a, b and c.

The protein localises to the mitochondrion membrane. In terms of biological role, mitochondrial membrane ATP synthase (F(1)F(0) ATP synthase or Complex V) produces ATP from ADP in the presence of a proton gradient across the membrane which is generated by electron transport complexes of the respiratory chain. F-type ATPases consist of two structural domains, F(1) - containing the extramembraneous catalytic core and F(0) - containing the membrane proton channel, linked together by a central stalk and a peripheral stalk. During catalysis, ATP synthesis in the catalytic domain of F(1) is coupled via a rotary mechanism of the central stalk subunits to proton translocation. Part of the complex F(0) domain. A homomeric c-ring of probably 10 subunits is part of the complex rotary element. This is ATP synthase subunit 9, mitochondrial (atp9) from Emericella nidulans (strain FGSC A4 / ATCC 38163 / CBS 112.46 / NRRL 194 / M139) (Aspergillus nidulans).